Consider the following 610-residue polypeptide: Probable pleckstrin homology domain-containing family N member 1 (610 aa).

The tract at residues Met-1 to Asp-30 is disordered. The N-myristoyl glycine moiety is linked to residue Gly-2. The segment at Thr-61–Ser-100 is interaction with C1QBP. PH domains follow at residues Val-96 to Leu-192 and Ala-227 to Asp-324. Residue Tyr-307 is modified to Phosphotyrosine. 4 disordered regions span residues His-327–Arg-357, Gln-371–Leu-431, Leu-443–Arg-473, and Pro-493–Ile-610. 2 stretches are compositionally biased toward polar residues: residues Gln-371–Thr-380 and Asn-391–Gln-402. A Phosphotyrosine modification is found at Tyr-462. Positions Val-504–Ser-526 are enriched in low complexity.

Found in a complex with cytochrome c mRNA and various ribosomal proteins. Interacts with C1QBP, ELAVL1 and BID. Phosphorylation is essential for its mitochondrial localization and regulates its interaction with C1QBP. As to expression, testis and adipose tissue (at protein level). Ubiquitous.

The protein resides in the cell membrane. It localises to the mitochondrion membrane. Its subcellular location is the mitochondrion. Functionally, controls the stability of the leptin mRNA harboring an AU-rich element (ARE) in its 3' UTR, in cooperation with the RNA stabilizer ELAVL1. Decreases the stability of the leptin mRNA by antagonizing the function of ELAVL1 by inducing its atypical recruitment from the nucleus to the cytosol. Binds to cardiolipin (CL), phosphatidic acid (PA), phosphatidylinositol 4-phosphate (PtdIns(4)P) and phosphatidylserine (PS). The protein is Probable pleckstrin homology domain-containing family N member 1 (Plekhn1) of Mus musculus (Mouse).